A 180-amino-acid chain; its full sequence is Free methionine-R-sulfoxide reductase (180 aa).

Positions 99-177 constitute a GAF domain; that stretch reads GVCGTAASTK…KLAKLINKSC (79 aa).

Belongs to the free Met sulfoxide reductase family.

Its subcellular location is the cytoplasm. It localises to the nucleus. It catalyses the reaction [thioredoxin]-disulfide + L-methionine + H2O = L-methionine (R)-S-oxide + [thioredoxin]-dithiol. Functionally, catalyzes the reversible oxidation-reduction of the R-enantiomer of free methionine sulfoxide to methionine. Does not act on S-enantiomer of free methionine sulfoxide or R-enantiomer of dabsylated methionine sulfoxide. Involved in protection against oxidative stress. This Saccharomyces cerevisiae (strain ATCC 204508 / S288c) (Baker's yeast) protein is Free methionine-R-sulfoxide reductase.